A 338-amino-acid polypeptide reads, in one-letter code: Holliday junction branch migration complex subunit RuvB (338 aa).

Residues 4–185 (EDQKILDAKP…FGIVAHMQFY (182 aa)) are large ATPase domain (RuvB-L). ATP-binding positions include leucine 24, arginine 25, glycine 66, lysine 69, threonine 70, threonine 71, 132–134 (EDF), arginine 175, tyrosine 185, and arginine 222. Threonine 70 provides a ligand contact to Mg(2+). The segment at 186 to 256 (PVSDLKLIAK…IVDNALNKLH (71 aa)) is small ATPAse domain (RuvB-S). The segment at 259 to 338 (ARGLDETDLK…LQIPYQTGLS (80 aa)) is head domain (RuvB-H). 2 residues coordinate DNA: arginine 314 and arginine 319.

The protein belongs to the RuvB family. Homohexamer. Forms an RuvA(8)-RuvB(12)-Holliday junction (HJ) complex. HJ DNA is sandwiched between 2 RuvA tetramers; dsDNA enters through RuvA and exits via RuvB. An RuvB hexamer assembles on each DNA strand where it exits the tetramer. Each RuvB hexamer is contacted by two RuvA subunits (via domain III) on 2 adjacent RuvB subunits; this complex drives branch migration. In the full resolvosome a probable DNA-RuvA(4)-RuvB(12)-RuvC(2) complex forms which resolves the HJ.

Its subcellular location is the cytoplasm. It carries out the reaction ATP + H2O = ADP + phosphate + H(+). Functionally, the RuvA-RuvB-RuvC complex processes Holliday junction (HJ) DNA during genetic recombination and DNA repair, while the RuvA-RuvB complex plays an important role in the rescue of blocked DNA replication forks via replication fork reversal (RFR). RuvA specifically binds to HJ cruciform DNA, conferring on it an open structure. The RuvB hexamer acts as an ATP-dependent pump, pulling dsDNA into and through the RuvAB complex. RuvB forms 2 homohexamers on either side of HJ DNA bound by 1 or 2 RuvA tetramers; 4 subunits per hexamer contact DNA at a time. Coordinated motions by a converter formed by DNA-disengaged RuvB subunits stimulates ATP hydrolysis and nucleotide exchange. Immobilization of the converter enables RuvB to convert the ATP-contained energy into a lever motion, pulling 2 nucleotides of DNA out of the RuvA tetramer per ATP hydrolyzed, thus driving DNA branch migration. The RuvB motors rotate together with the DNA substrate, which together with the progressing nucleotide cycle form the mechanistic basis for DNA recombination by continuous HJ branch migration. Branch migration allows RuvC to scan DNA until it finds its consensus sequence, where it cleaves and resolves cruciform DNA. The sequence is that of Holliday junction branch migration complex subunit RuvB from Oenococcus oeni (strain ATCC BAA-331 / PSU-1).